A 90-amino-acid polypeptide reads, in one-letter code: U7-theraphotoxin-Hhn1a 4 (90 aa).

The N-terminal stretch at 1 to 19 (MKTAIFTVVLALAVFAVLS) is a signal peptide. The propeptide occupies 20-50 (FGWEANEEALSEEFTELIHEKEAASETEARE). Intrachain disulfides connect C51/C65, C58/C70, and C64/C81.

It belongs to the neurotoxin 10 (Hwtx-1) family. 13 (Hntx-13) subfamily. As to expression, expressed by the venom gland.

It localises to the secreted. Functionally, ion channel inhibitor. This chain is U7-theraphotoxin-Hhn1a 4, found in Cyriopagopus hainanus (Chinese bird spider).